The following is an 878-amino-acid chain: Protein argonaute 6 (878 aa).

The segment covering 1–17 (METSSSLPLSPISIEPE) has biased composition (low complexity). Residues 1 to 25 (METSSSLPLSPISIEPEQPSHRDYD) are disordered. Residues 259 to 372 (PVIEFLKANQ…LPLEFCNLVS (114 aa)) form the PAZ domain. Residues 541–851 (FILCILPERK…AAAQVAQFTK (311 aa)) enclose the Piwi domain.

Belongs to the argonaute family. Ago subfamily. In terms of tissue distribution, expressed in roots, cotyledons and shoot meristematic region.

It localises to the nucleus. Involved in transcriptional gene silencing (TGS). Component of the RISC complex that associate with the small interfering RNA (siRNA) pathway involved in direct cytosine methylation at endogenous DNA repeats. Required for the accumulation of specific siRNAs derived from transgene and heterochromatin-related endogenous loci. Involved in RNA-directed DNA methylation (RdDM) at specific endogenous loci. Probably not required for the accumulation of siRNAs derived from transgene inverted repeats that induce post-transcriptional gene silencing (PTGS). Associates mainly with small RNAs of 24 nucleotide in length and preferentially recruits small RNAs with a 5' terminal adenosine. Targeted by turnip yellows virus (TuYV) protein P0 (via F-box-like domain) for probable proteasome degradation and thereby inactivating AGO6 function in RNA silencing. The sequence is that of Protein argonaute 6 (AGO6) from Arabidopsis thaliana (Mouse-ear cress).